The chain runs to 192 residues: Pyridoxal 5'-phosphate synthase subunit PdxT (192 aa).

46 to 48 is a binding site for L-glutamine; the sequence is GES. Cys76 functions as the Nucleophile in the catalytic mechanism. L-glutamine is bound by residues Arg103 and 131-132; that span reads IR. Catalysis depends on charge relay system residues His167 and Glu169.

The protein belongs to the glutaminase PdxT/SNO family. In the presence of PdxS, forms a dodecamer of heterodimers. Only shows activity in the heterodimer.

It catalyses the reaction aldehydo-D-ribose 5-phosphate + D-glyceraldehyde 3-phosphate + L-glutamine = pyridoxal 5'-phosphate + L-glutamate + phosphate + 3 H2O + H(+). The catalysed reaction is L-glutamine + H2O = L-glutamate + NH4(+). Its pathway is cofactor biosynthesis; pyridoxal 5'-phosphate biosynthesis. Functionally, catalyzes the hydrolysis of glutamine to glutamate and ammonia as part of the biosynthesis of pyridoxal 5'-phosphate. The resulting ammonia molecule is channeled to the active site of PdxS. This Koribacter versatilis (strain Ellin345) protein is Pyridoxal 5'-phosphate synthase subunit PdxT.